A 293-amino-acid chain; its full sequence is 4-hydroxy-tetrahydrodipicolinate synthase (293 aa).

Threonine 46 contributes to the pyruvate binding site. Tyrosine 133 functions as the Proton donor/acceptor in the catalytic mechanism. The active-site Schiff-base intermediate with substrate is the lysine 161. Valine 202 is a pyruvate binding site.

This sequence belongs to the DapA family. In terms of assembly, homotetramer; dimer of dimers.

It is found in the cytoplasm. It carries out the reaction L-aspartate 4-semialdehyde + pyruvate = (2S,4S)-4-hydroxy-2,3,4,5-tetrahydrodipicolinate + H2O + H(+). It functions in the pathway amino-acid biosynthesis; L-lysine biosynthesis via DAP pathway; (S)-tetrahydrodipicolinate from L-aspartate: step 3/4. In terms of biological role, catalyzes the condensation of (S)-aspartate-beta-semialdehyde [(S)-ASA] and pyruvate to 4-hydroxy-tetrahydrodipicolinate (HTPA). The sequence is that of 4-hydroxy-tetrahydrodipicolinate synthase from Wolbachia pipientis subsp. Culex pipiens (strain wPip).